The chain runs to 275 residues: Leucine-rich repeat-containing protein 3C (275 aa).

The first 41 residues, M1–T41, serve as a signal peptide directing secretion. An LRRNT domain is found at V42–N79. 3 LRR repeats span residues D80–H101, V104–G125, and T129–G150. N156 carries N-linked (GlcNAc...) asparagine glycosylation. The 53-residue stretch at N160–S212 folds into the LRRCT domain. A helical transmembrane segment spans residues L225–W245.

This sequence belongs to the LRRC3 family.

It is found in the membrane. The protein is Leucine-rich repeat-containing protein 3C (LRRC3C) of Homo sapiens (Human).